We begin with the raw amino-acid sequence, 397 residues long: Acetate kinase 2 (397 aa).

Asparagine 8 is a binding site for Mg(2+). Lysine 15 contacts ATP. Arginine 89 contacts substrate. The active-site Proton donor/acceptor is aspartate 146. Residues 206 to 210 (HLGNG), 281 to 283 (DLR), and 329 to 333 (GIGEN) each bind ATP. Glutamate 382 is a Mg(2+) binding site.

Belongs to the acetokinase family. Homodimer. Requires Mg(2+) as cofactor. The cofactor is Mn(2+).

It localises to the cytoplasm. The enzyme catalyses acetate + ATP = acetyl phosphate + ADP. It functions in the pathway metabolic intermediate biosynthesis; acetyl-CoA biosynthesis; acetyl-CoA from acetate: step 1/2. Functionally, catalyzes the formation of acetyl phosphate from acetate and ATP. Can also catalyze the reverse reaction. The polypeptide is Acetate kinase 2 (Listeria monocytogenes serotype 4b (strain F2365)).